The following is a 555-amino-acid chain: MTQTRRDNSRIIRAKHGSELDATHWAAEAPLRMLMNNLDPDVAEKPEELVVYGGIGRAARDWESYDRIVATLKRLKEDETLLVQSGKPVGVFRTHKDAPRVLIANSNLVPNWANWDHFRELDKKGLMMYGQMTAGSWIYIGSQGIVQGTYETFVEAGRQHYDGDLTGKWILTGGLGGMGGAQPLAATMAGASMLAVECQPSRIEMRLKTGYLDKSATTLDEALEIINAACAKGEAVSVGLLGNAAEVFPELVKRGVKPDMVTDQTSAHDPANGYLPAGWTLAEWDEKRESDPAAVEAAAKASMAEQVKAMLAFWEQGIPTLDYGNNIRQMAFDEGVTNAFDFPGFVPAYIRPLFCRGIGPFRWAALSGDPEDIYKTDAKVKELIPDNPHLHRWLDMARERIHFQGLPARICWVGLGERHKLGLAFNEMVRTGELSAPVVIGRDHLDSGSVASPNRETEAMMDGSDAVADWPLLNALLNTASGATWVSLHHGGGVGMGYSLHSGQVVLADGTVEAAERVGRVLWNDPGTGVMRHADAGYEIAKDCAKEQGLDLPSV.

NAD(+) is bound by residues 53-54 (GG), glutamine 131, 177-179 (GMG), glutamate 197, arginine 202, 243-244 (NA), 264-268 (QTSAH), 274-275 (YL), and tyrosine 323. Cysteine 411 is an active-site residue. NAD(+) is bound at residue glycine 493.

Belongs to the urocanase family. Requires NAD(+) as cofactor.

Its subcellular location is the cytoplasm. The enzyme catalyses 4-imidazolone-5-propanoate = trans-urocanate + H2O. It functions in the pathway amino-acid degradation; L-histidine degradation into L-glutamate; N-formimidoyl-L-glutamate from L-histidine: step 2/3. Catalyzes the conversion of urocanate to 4-imidazolone-5-propionate. This Maricaulis maris (strain MCS10) (Caulobacter maris) protein is Urocanate hydratase.